A 337-amino-acid polypeptide reads, in one-letter code: Receptor like protein kinase S.3 (337 aa).

The region spanning 50–316 is the Protein kinase domain; it reads FKESELFGTE…VNYLEGNDVL (267 aa). Residues 56–64 and lysine 78 each bind ATP; that span reads FGTEANGTV. Tyrosine 123 bears the Phosphotyrosine mark. Catalysis depends on aspartate 171, which acts as the Proton acceptor.

This sequence belongs to the protein kinase superfamily. Ser/Thr protein kinase family.

The enzyme catalyses L-seryl-[protein] + ATP = O-phospho-L-seryl-[protein] + ADP + H(+). The catalysed reaction is L-threonyl-[protein] + ATP = O-phospho-L-threonyl-[protein] + ADP + H(+). The protein is Receptor like protein kinase S.3 (LECRKS3) of Arabidopsis thaliana (Mouse-ear cress).